The following is a 271-amino-acid chain: Phosphate import ATP-binding protein PstB (271 aa).

Residues Met-24–Ile-266 enclose the ABC transporter domain. Residue Gly-56–Ser-63 participates in ATP binding.

This sequence belongs to the ABC transporter superfamily. Phosphate importer (TC 3.A.1.7) family. In terms of assembly, the complex is composed of two ATP-binding proteins (PstB), two transmembrane proteins (PstC and PstA) and a solute-binding protein (PstS).

It localises to the cell inner membrane. The enzyme catalyses phosphate(out) + ATP + H2O = ADP + 2 phosphate(in) + H(+). Functionally, part of the ABC transporter complex PstSACB involved in phosphate import. Responsible for energy coupling to the transport system. The chain is Phosphate import ATP-binding protein PstB from Rhizobium etli (strain ATCC 51251 / DSM 11541 / JCM 21823 / NBRC 15573 / CFN 42).